The following is a 105-amino-acid chain: Putative regulatory protein COPRO5265_1186 (105 aa).

A disordered region spans residues 76 to 105 (RLEEEEEEEERTEPITEQEAELEEESGEDV). Positions 78 to 105 (EEEEEEEERTEPITEQEAELEEESGEDV) are enriched in acidic residues.

The protein belongs to the RemA family.

In Coprothermobacter proteolyticus (strain ATCC 35245 / DSM 5265 / OCM 4 / BT), this protein is Putative regulatory protein COPRO5265_1186.